An 89-amino-acid chain; its full sequence is MAHKKAGGSSRNGRDSAGKRLGIKAYGGEHVIPGNIIARQRGTTWHPGLNVGMGTDHTLFAKVEGRVEFRAKANGRTFVSVLPIAQAAE.

Residues 1-20 (MAHKKAGGSSRNGRDSAGKR) form a disordered region.

Belongs to the bacterial ribosomal protein bL27 family.

The sequence is that of Large ribosomal subunit protein bL27 from Rhodopseudomonas palustris (strain HaA2).